The chain runs to 212 residues: Uridine kinase (212 aa).

An ATP-binding site is contributed by 13-20; the sequence is GGSGSGKT.

This sequence belongs to the uridine kinase family.

It localises to the cytoplasm. It carries out the reaction uridine + ATP = UMP + ADP + H(+). It catalyses the reaction cytidine + ATP = CMP + ADP + H(+). The protein operates within pyrimidine metabolism; CTP biosynthesis via salvage pathway; CTP from cytidine: step 1/3. Its pathway is pyrimidine metabolism; UMP biosynthesis via salvage pathway; UMP from uridine: step 1/1. The protein is Uridine kinase of Bacillus cereus (strain B4264).